The sequence spans 249 residues: 5'-nucleotidase SurE (249 aa).

Positions 8, 9, 39, and 91 each coordinate a divalent metal cation.

Belongs to the SurE nucleotidase family. Requires a divalent metal cation as cofactor.

It is found in the cytoplasm. The catalysed reaction is a ribonucleoside 5'-phosphate + H2O = a ribonucleoside + phosphate. Nucleotidase that shows phosphatase activity on nucleoside 5'-monophosphates. The protein is 5'-nucleotidase SurE of Pseudomonas savastanoi pv. phaseolicola (strain 1448A / Race 6) (Pseudomonas syringae pv. phaseolicola (strain 1448A / Race 6)).